The primary structure comprises 301 residues: Ribosomal protein L11 methyltransferase (301 aa).

4 residues coordinate S-adenosyl-L-methionine: threonine 146, glycine 167, aspartate 189, and asparagine 234.

Belongs to the methyltransferase superfamily. PrmA family.

Its subcellular location is the cytoplasm. It carries out the reaction L-lysyl-[protein] + 3 S-adenosyl-L-methionine = N(6),N(6),N(6)-trimethyl-L-lysyl-[protein] + 3 S-adenosyl-L-homocysteine + 3 H(+). In terms of biological role, methylates ribosomal protein L11. This is Ribosomal protein L11 methyltransferase from Acinetobacter baumannii (strain SDF).